Here is a 201-residue protein sequence, read N- to C-terminus: Small ribosomal subunit protein uS4c (201 aa).

The disordered stretch occupies residues 15-43 (LGALPGLTNKRPRAGSDLRNQSRSGKRSQ). The S4 RNA-binding domain maps to 89–149 (MRLDNILFRL…DEQKSIALIQ (61 aa)).

As to quaternary structure, component of the chloroplast small ribosomal subunit (SSU). Mature 70S chloroplast ribosomes of higher plants consist of a small (30S) and a large (50S) subunit. The 30S small subunit contains 1 molecule of ribosomal RNA (16S rRNA) and 24 different proteins. The 50S large subunit contains 3 rRNA molecules (23S, 5S and 4.5S rRNA) and 33 different proteins.

It is found in the plastid. It localises to the chloroplast. In terms of biological role, component of the chloroplast ribosome (chloro-ribosome), a dedicated translation machinery responsible for the synthesis of chloroplast genome-encoded proteins, including proteins of the transcription and translation machinery and components of the photosynthetic apparatus. In Spinacia oleracea (Spinach), this protein is Small ribosomal subunit protein uS4c (rps4).